Consider the following 1058-residue polypeptide: Kinesin-like protein KIN-7M, chloroplastic (1058 aa).

The N-terminal 60 residues, 1–60, are a transit peptide targeting the chloroplast; the sequence is MASSSSRTRSRSPFSHRRPPSPYSSASSTSSSLINNRLLPRSSSTPTSTVYNSGGVTGSR. The disordered stretch occupies residues 1 to 92; that stretch reads MASSSSRTRS…QSYPSEGLIG (92 aa). Residues 8-19 show a composition bias toward basic residues; sequence TRSRSPFSHRRP. A compositionally biased stretch (low complexity) spans 23-49; the sequence is YSSASSTSSSLINNRLLPRSSSTPTST. Residues 50-70 show a composition bias toward polar residues; sequence VYNSGGVTGSRSMSITRTISD. Residues 104–421 enclose the Kinesin motor domain; the sequence is SISVTVRFRP…LKFASRAKRI (318 aa). 184 to 191 contributes to the ATP binding site; that stretch reads GVTSSGKT. The stretch at 422-509 forms a coiled coil; it reads EINASRNKII…QKLTKLILVS (88 aa). The segment at 549 to 578 is disordered; sequence PSSTLSLASDARRSSSKFKDENSPVGSRAE. Basic and acidic residues predominate over residues 558–570; it reads DARRSSSKFKDEN. 4 coiled-coil regions span residues 621-658, 704-826, 873-904, and 935-999; these read PENS…ASIA, NNEL…AQKR, LEAA…LEND, and KEDE…SQAA. The segment covering 824-838 has biased composition (low complexity); that stretch reads QKRNNNSMNSAANRN. The disordered stretch occupies residues 824-847; the sequence is QKRNNNSMNSAANRNGTRPGRKAR. Residues 922–946 are disordered; the sequence is ALSIQKSDEAEPAKEDEVTELDNKN. Positions 927–946 are enriched in basic and acidic residues; the sequence is KSDEAEPAKEDEVTELDNKN. The RING-type zinc finger occupies 1011–1046; that stretch reads CKVCFESPTATILLPCRHFCLCKSCSLACSECPICR.

This sequence belongs to the TRAFAC class myosin-kinesin ATPase superfamily. Kinesin family. KIN-7 subfamily.

The protein localises to the plastid. The protein resides in the chloroplast. In Arabidopsis thaliana (Mouse-ear cress), this protein is Kinesin-like protein KIN-7M, chloroplastic.